The following is a 419-amino-acid chain: Ras association domain-containing protein 8 (419 aa).

Residues 1 to 82 (MELKVWVDGV…VQLILRRTGP (82 aa)) form the Ras-associating domain. 2 positions are modified to phosphoserine: serine 105 and serine 129. Threonine 131 carries the phosphothreonine modification. A disordered region spans residues 372 to 399 (ASQADIETEAPFQSGSLKRPGSSRQLPS). Residues 382–399 (PFQSGSLKRPGSSRQLPS) are compositionally biased toward polar residues. Serine 387 bears the Phosphoserine mark.

The protein is Ras association domain-containing protein 8 (Rassf8) of Mus musculus (Mouse).